Consider the following 305-residue polypeptide: Sulfate adenylyltransferase subunit 2 (305 aa).

This sequence belongs to the PAPS reductase family. CysD subfamily. As to quaternary structure, heterodimer composed of CysD, the smaller subunit, and CysN.

The catalysed reaction is sulfate + ATP + H(+) = adenosine 5'-phosphosulfate + diphosphate. The protein operates within sulfur metabolism; hydrogen sulfide biosynthesis; sulfite from sulfate: step 1/3. In terms of biological role, with CysN forms the ATP sulfurylase (ATPS) that catalyzes the adenylation of sulfate producing adenosine 5'-phosphosulfate (APS) and diphosphate, the first enzymatic step in sulfur assimilation pathway. APS synthesis involves the formation of a high-energy phosphoric-sulfuric acid anhydride bond driven by GTP hydrolysis by CysN coupled to ATP hydrolysis by CysD. The sequence is that of Sulfate adenylyltransferase subunit 2 from Pseudomonas fluorescens (strain Pf0-1).